Here is a 353-residue protein sequence, read N- to C-terminus: Photosystem II D2 protein (353 aa).

Threonine 2 carries the post-translational modification N-acetylthreonine. A Phosphothreonine modification is found at threonine 2. The helical transmembrane segment at 41–61 (CAYFALGGWFTGTTFVTSWYT) threads the bilayer. Position 118 (histidine 118) interacts with chlorophyll a. The helical transmembrane segment at 125–141 (GFMLRQFELARSVQLRP) threads the bilayer. Pheophytin a contacts are provided by glutamine 130 and asparagine 143. A helical transmembrane segment spans residues 153-166 (VFVSVFLIYPLGQS). A chlorophyll a-binding site is contributed by histidine 198. A helical membrane pass occupies residues 208–228 (AALLCAIHGATVENTLFEDGD). Positions 215 and 262 each coordinate a plastoquinone. A Fe cation-binding site is contributed by histidine 215. Histidine 269 contributes to the Fe cation binding site. Residues 279–295 (GLWMSAIGVVGLALNLR) form a helical membrane-spanning segment.

The protein belongs to the reaction center PufL/M/PsbA/D family. PSII is composed of 1 copy each of membrane proteins PsbA, PsbB, PsbC, PsbD, PsbE, PsbF, PsbH, PsbI, PsbJ, PsbK, PsbL, PsbM, PsbT, PsbX, PsbY, PsbZ, Psb30/Ycf12, at least 3 peripheral proteins of the oxygen-evolving complex and a large number of cofactors. It forms dimeric complexes. The D1/D2 heterodimer binds P680, chlorophylls that are the primary electron donor of PSII, and subsequent electron acceptors. It shares a non-heme iron and each subunit binds pheophytin, quinone, additional chlorophylls, carotenoids and lipids. There is also a Cl(-1) ion associated with D1 and D2, which is required for oxygen evolution. The PSII complex binds additional chlorophylls, carotenoids and specific lipids. is required as a cofactor.

Its subcellular location is the plastid. It localises to the chloroplast thylakoid membrane. The enzyme catalyses 2 a plastoquinone + 4 hnu + 2 H2O = 2 a plastoquinol + O2. Photosystem II (PSII) is a light-driven water:plastoquinone oxidoreductase that uses light energy to abstract electrons from H(2)O, generating O(2) and a proton gradient subsequently used for ATP formation. It consists of a core antenna complex that captures photons, and an electron transfer chain that converts photonic excitation into a charge separation. The D1/D2 (PsbA/PsbD) reaction center heterodimer binds P680, the primary electron donor of PSII as well as several subsequent electron acceptors. D2 is needed for assembly of a stable PSII complex. The polypeptide is Photosystem II D2 protein (Lolium perenne (Perennial ryegrass)).